Consider the following 275-residue polypeptide: Erythroagglutinating phytohemagglutinin (275 aa).

The first 21 residues, 1 to 21 (MASSNLLSLALFLVLLTHANS), serve as a signal peptide directing secretion. Residue N33 is glycosylated (N-linked (GlcNAc...) (high mannose) asparagine). 2 N-linked (GlcNAc...) asparagine glycosylation sites follow: N81 and N101.

Belongs to the leguminous lectin family.

This insecticidal carbohydrate-binding lectin is toxic for the cowpea weevil. The chain is Erythroagglutinating phytohemagglutinin (DLEC1) from Phaseolus vulgaris (Kidney bean).